We begin with the raw amino-acid sequence, 127 residues long: MLQLLLAVFIGGGTGSVARWMLSMRFNPLHQAIPIGTLTANLLGAFIIGMGFAWFNRMTHIDPMWKVLITTGFCGGLTTFSTFSAEVVFLLQEGRFGWALLNVLINLLGSFAMTALAFWLFSAAAAR.

4 consecutive transmembrane segments (helical) span residues 4-24 (LLLAVFIGGGTGSVARWMLSM), 35-55 (IGTLTANLLGAFIIGMGFAWF), 71-91 (TGFCGGLTTFSTFSAEVVFLL), and 103-123 (VLINLLGSFAMTALAFWLFSA). Na(+) contacts are provided by Gly-75 and Thr-78.

It belongs to the fluoride channel Fluc/FEX (TC 1.A.43) family.

It is found in the cell inner membrane. It catalyses the reaction fluoride(in) = fluoride(out). With respect to regulation, na(+) is not transported, but it plays an essential structural role and its presence is essential for fluoride channel function. Functionally, fluoride-specific ion channel. Important for reducing fluoride concentration in the cell, thus reducing its toxicity. This is Fluoride-specific ion channel FluC from Salmonella agona (strain SL483).